Consider the following 57-residue polypeptide: Large ribosomal subunit protein bL32 (57 aa).

It belongs to the bacterial ribosomal protein bL32 family.

This chain is Large ribosomal subunit protein bL32, found in Bacillus licheniformis (strain ATCC 14580 / DSM 13 / JCM 2505 / CCUG 7422 / NBRC 12200 / NCIMB 9375 / NCTC 10341 / NRRL NRS-1264 / Gibson 46).